A 236-amino-acid chain; its full sequence is 2-phospho-L-lactate guanylyltransferase (236 aa).

It belongs to the CofC family. In terms of assembly, homodimer.

It carries out the reaction (2S)-2-phospholactate + GTP + H(+) = (2S)-lactyl-2-diphospho-5'-guanosine + diphosphate. Its pathway is cofactor biosynthesis; coenzyme F420 biosynthesis. Functionally, guanylyltransferase that catalyzes the activation of (2S)-2-phospholactate (2-PL) as (2S)-lactyl-2-diphospho-5'-guanosine, via the condensation of 2-PL with GTP. It is involved in the biosynthesis of coenzyme F420, a hydride carrier cofactor. This chain is 2-phospho-L-lactate guanylyltransferase, found in Natrialba magadii (strain ATCC 43099 / DSM 3394 / CCM 3739 / CIP 104546 / IAM 13178 / JCM 8861 / NBRC 102185 / NCIMB 2190 / MS3) (Natronobacterium magadii).